We begin with the raw amino-acid sequence, 293 residues long: Acetyl-coenzyme A carboxylase carboxyl transferase subunit beta (293 aa).

Residues 29-293 (LWRKCPRCEG…MGWPPLALDD (265 aa)) enclose the CoA carboxyltransferase N-terminal domain. Zn(2+) is bound by residues C33, C36, C52, and C55. A C4-type zinc finger spans residues 33-55 (CPRCEGVVYRPELDRNMDVCPKC).

It belongs to the AccD/PCCB family. In terms of assembly, acetyl-CoA carboxylase is a heterohexamer composed of biotin carboxyl carrier protein (AccB), biotin carboxylase (AccC) and two subunits each of ACCase subunit alpha (AccA) and ACCase subunit beta (AccD). Zn(2+) is required as a cofactor.

The protein localises to the cytoplasm. It carries out the reaction N(6)-carboxybiotinyl-L-lysyl-[protein] + acetyl-CoA = N(6)-biotinyl-L-lysyl-[protein] + malonyl-CoA. It functions in the pathway lipid metabolism; malonyl-CoA biosynthesis; malonyl-CoA from acetyl-CoA: step 1/1. Its function is as follows. Component of the acetyl coenzyme A carboxylase (ACC) complex. Biotin carboxylase (BC) catalyzes the carboxylation of biotin on its carrier protein (BCCP) and then the CO(2) group is transferred by the transcarboxylase to acetyl-CoA to form malonyl-CoA. This is Acetyl-coenzyme A carboxylase carboxyl transferase subunit beta from Alcanivorax borkumensis (strain ATCC 700651 / DSM 11573 / NCIMB 13689 / SK2).